We begin with the raw amino-acid sequence, 153 residues long: MSATRRLQKELGDLKNCGVKAYENVECEETNLLKWTVLLIPDKEPYNKGAFKVGITFPVDYPFKPPKVAFETKIYHPNVDEEGKFCLPIVTAENWKPATKTEQVMMALLSLINEPEPSHPIRADVAEEFQKDHKKFMKTAEEHTRKHAEKRPE.

The UBC core domain maps to 2 to 149; sequence SATRRLQKEL…AEEHTRKHAE (148 aa). Catalysis depends on C86, which acts as the Glycyl thioester intermediate.

The protein belongs to the ubiquitin-conjugating enzyme family. As to quaternary structure, interacts with E3 ubiquitin-protein ligase wwp-1. Interacts with RBR-type E3 ubiquitin transferase ari-1.1. In terms of tissue distribution, expressed in neurons localized in the head and tail of adults.

It catalyses the reaction S-ubiquitinyl-[E1 ubiquitin-activating enzyme]-L-cysteine + [E2 ubiquitin-conjugating enzyme]-L-cysteine = [E1 ubiquitin-activating enzyme]-L-cysteine + S-ubiquitinyl-[E2 ubiquitin-conjugating enzyme]-L-cysteine.. Its function is as follows. Ubiquitin-conjugating enzyme E2. Accepts ubiquitin from the E1 complex and catalyzes its covalent attachment to other proteins. Required for diet restriction-mediated lifespan extension, probably acting as part of a complex with ubiquitin-protein ligase wwp-1. Acts redundantly with lin-35/Rb in the regulation of pharyngeal morphogenesis during embryonic development by negatively regulating the expression of proteins such as sup-35. In Caenorhabditis elegans, this protein is Ubiquitin-conjugating enzyme E2 ubc-18.